Reading from the N-terminus, the 38-residue chain is Large ribosomal subunit protein bL36 (38 aa).

This sequence belongs to the bacterial ribosomal protein bL36 family.

This chain is Large ribosomal subunit protein bL36, found in Acholeplasma laidlawii (strain PG-8A).